A 343-amino-acid polypeptide reads, in one-letter code: UDP-glucuronic acid decarboxylase 6 (343 aa).

The interval 1-22 is disordered; the sequence is MASNSSNGTTTTKPPPMPSPLR. N-acetylalanine is present on Ala2. 62-87 contacts NAD(+); the sequence is DNYFTGSKDNLKKWIGHPRFELIRHD. Arg171 serves as a coordination point for substrate. Catalysis depends on Tyr174, which acts as the Proton acceptor. 174–178 contributes to the NAD(+) binding site; the sequence is YDEGK. A substrate-binding site is contributed by Asn203. Position 215 (Arg215) interacts with NAD(+). Residues 216 to 220, 233 to 240, and 300 to 304 each bind substrate; these read VVSNF, QKPGTQTR, and DPRQR.

The protein belongs to the NAD(P)-dependent epimerase/dehydratase family. UDP-glucuronic acid decarboxylase subfamily. It depends on NAD(+) as a cofactor.

The protein localises to the cytoplasm. The enzyme catalyses UDP-alpha-D-glucuronate + H(+) = UDP-alpha-D-xylose + CO2. The protein operates within nucleotide-sugar biosynthesis; UDP-alpha-D-xylose biosynthesis; UDP-alpha-D-xylose from UDP-alpha-D-glucuronate: step 1/1. Functionally, catalyzes the NAD-dependent decarboxylation of UDP-glucuronic acid to UDP-xylose. Necessary for the biosynthesis of the core tetrasaccharide in glycosaminoglycan biosynthesis. The protein is UDP-glucuronic acid decarboxylase 6 (UXS6) of Arabidopsis thaliana (Mouse-ear cress).